We begin with the raw amino-acid sequence, 400 residues long: Subtilisin-like protease 7 (400 aa).

An N-terminal signal peptide occupies residues Met1–Gly20. The propeptide occupies Ala21–Asn119. Positions Lys36 to Ile118 constitute an Inhibitor I9 domain. The 272-residue stretch at Ser129 to Met400 folds into the Peptidase S8 domain. Catalysis depends on charge relay system residues Asp161 and His192. A glycan (N-linked (GlcNAc...) asparagine) is linked at Asn252. Catalysis depends on Ser346, which acts as the Charge relay system. The N-linked (GlcNAc...) asparagine glycan is linked to Asn396.

It belongs to the peptidase S8 family.

The protein resides in the secreted. Its function is as follows. Secreted subtilisin-like serine protease with keratinolytic activity that contributes to pathogenicity. The protein is Subtilisin-like protease 7 (SUB7) of Trichophyton violaceum.